The primary structure comprises 241 residues: Platelet-derived growth factor subunit B (241 aa).

The first 20 residues, 1–20, serve as a signal peptide directing secretion; it reads MNRCWALFLSLCCYLRLVSA. Residues 21–81 constitute a propeptide, removed in mature form; the sequence is EGDPIPEELY…ELESLSRGRR (61 aa). Asn-63 carries an N-linked (GlcNAc...) asparagine glycan. Cystine bridges form between Cys-97/Cys-141, Cys-130/Cys-178, and Cys-134/Cys-180. Residues 191–241 constitute a propeptide, removed in mature form; sequence TPGSSQEQRAARTPQTRVTIRTVRVRRPPKGKHRKFKHTHDKTALKETLGA. A compositionally biased stretch (basic residues) spans 217-230; sequence RPPKGKHRKFKHTH. The disordered stretch occupies residues 217–241; that stretch reads RPPKGKHRKFKHTHDKTALKETLGA.

It belongs to the PDGF/VEGF growth factor family. In terms of assembly, antiparallel homodimer; disulfide-linked. Antiparallel heterodimer with PDGFA; disulfide-linked. The PDGFB homodimer interacts with PDGFRA and PDGFRB homodimers, and with heterodimers formed by PDGFRA and PDGFRB. The heterodimer composed of PDGFA and PDGFB interacts with PDGFRB homodimers, and with heterodimers formed by PDGFRA and PDGFRB. Interacts with XLKD1. Interacts with LRP1. Interacts with SORL1 (via the N-terminal ectodomain). Interacts with CD82; this interaction inhibits PDGFB-mediated signaling pathway.

The protein resides in the secreted. Its function is as follows. Growth factor that plays an essential role in the regulation of embryonic development, cell proliferation, cell migration, survival and chemotaxis. Potent mitogen for cells of mesenchymal origin. Required for normal proliferation and recruitment of pericytes and vascular smooth muscle cells in the central nervous system, skin, lung, heart and placenta. Required for normal blood vessel development, and for normal development of kidney glomeruli. Plays an important role in wound healing. Signaling is modulated by the formation of heterodimers with PDGFA. The sequence is that of Platelet-derived growth factor subunit B (PDGFB) from Ovis aries (Sheep).